Reading from the N-terminus, the 63-residue chain is Cytochrome c oxidase subunit 5C-1 (63 aa).

The chain crosses the membrane as a helical span at residues 15–34 (SEVKELIIGSVLGLAAGGLW).

Belongs to the cytochrome c oxidase subunit 5C family.

It is found in the mitochondrion inner membrane. Its function is as follows. This protein is one of the nuclear-coded polypeptide chains of cytochrome c oxidase, the terminal oxidase in mitochondrial electron transport. This Helianthus annuus (Common sunflower) protein is Cytochrome c oxidase subunit 5C-1 (COX5C1).